A 347-amino-acid chain; its full sequence is F-box/kelch-repeat protein At5g03020 (347 aa).

A disordered region spans residues 1 to 21; sequence MTEEMSKESPPPPPTSFSSLP. One can recognise an F-box domain in the interval 14-62; sequence PTSFSSLPDDVALDCRARISRFHYPTLSLVSKGFRTLIASPELEATRSF. Kelch repeat units follow at residues 119-165 and 167-215; these read QIYI…VIDG and IYVI…KKKH.

This chain is F-box/kelch-repeat protein At5g03020, found in Arabidopsis thaliana (Mouse-ear cress).